A 215-amino-acid polypeptide reads, in one-letter code: CASP-like protein 1E1 (215 aa).

Residues 1 to 51 (MESSRGKPGLNGSGGGAAAFDYSSRRGYYTGAGAALPPLAAGSRAPPVDPC) lie on the Cytoplasmic side of the membrane. The chain crosses the membrane as a helical span at residues 52–72 (CVALRVFVLLGTLASAVVMAA). Topologically, residues 73-103 (DRQSTTVQIAAGEQLAPPLRVPVTAKWTYSS) are extracellular. The chain crosses the membrane as a helical span at residues 104-124 (AFVYFVVANAMVFAFSAAALA). Residues 125–130 (AVRRRS) lie on the Cytoplasmic side of the membrane. A helical membrane pass occupies residues 131–151 (AVVPVMVGDLVAMALLFSAVG). Over 152–185 (AAAQFGLLGERGNAHVRWAKVCDVYGPFCERAMA) the chain is Extracellular. Residues 186-206 (AVVVALIAAFADLVLLMLTIL) form a helical membrane-spanning segment. Residues 207-215 (TIHKASSYY) lie on the Cytoplasmic side of the membrane.

The protein belongs to the Casparian strip membrane proteins (CASP) family. In terms of assembly, homodimer and heterodimers.

It localises to the cell membrane. This chain is CASP-like protein 1E1, found in Oryza sativa subsp. indica (Rice).